We begin with the raw amino-acid sequence, 338 residues long: Delta(9)-fatty-acid desaturase fat-7 (338 aa).

4 helical membrane passes run 51–71, 76–96, 194–214, and 218–238; these read VALFAALHVAAAIGLYELVFH, TAVFSFALYVFSGFGITAGAH, YFPLVILFCFILPTIIPVYFW, and AFIAFYVAGTFRYCFTLHATW.

It belongs to the fatty acid desaturase type 1 family. Expressed in the intestine in adult worms and in all four larval stages.

It localises to the membrane. The enzyme catalyses octadecanoyl-CoA + 2 Fe(II)-[cytochrome b5] + O2 + 2 H(+) = (9Z)-octadecenoyl-CoA + 2 Fe(III)-[cytochrome b5] + 2 H2O. The catalysed reaction is hexadecanoyl-CoA + 2 Fe(II)-[cytochrome b5] + O2 + 2 H(+) = (9Z)-hexadecenoyl-CoA + 2 Fe(III)-[cytochrome b5] + 2 H2O. It carries out the reaction heptadecanoyl-CoA + 2 Fe(II)-[cytochrome b5] + O2 + 2 H(+) = (9Z)-heptadecenoyl-CoA + 2 Fe(III)-[cytochrome b5] + 2 H2O. It catalyses the reaction (11E)-octadecenoyl-CoA + 2 Fe(II)-[cytochrome b5] + O2 + 2 H(+) = (9Z,11E)-octadecadienoyl-CoA + 2 Fe(III)-[cytochrome b5] + 2 H2O. Its pathway is lipid metabolism; monounsaturated fatty acid biosynthesis. It participates in lipid metabolism; fatty acid metabolism. Delta(9)-fatty acid desaturase that acts preferentially on stearoyl-CoA (octadecanoyl-CoA) producing the monounsaturated oleoyl-CoA ((9Z)-octadecenoyl-CoA), one of the most abundant monounsaturated fatty acid in Caenorhabditis elegans phospholipids and triacylglycerols. Also acts on palmitoyl-CoA (hexadecanoyl-CoA), heptadecanoyl-CoA and (11E)-octadecenoyl-CoA (trans-vaccenoyl-CoA), the monounsaturated fatty acids (MUFAs) produced are further used by several other desaturases and elongases as substrates to synthesize polyunsaturated fatty acids (PUFAs) endogenously (PUFAs are essential for membrane structure and many cellular and physiological processes). Unlike plants, Caenorhabditis elegans desaturases seem to use fatty acyl-CoAs as substrates. Partially inhibits expression of genes involved in beta-oxidation, such as ech-1 and acs-2, perhaps signaling via the actions of one of its fatty acid products. May form part of a negative feedback loop with the transcription factor nhr-49 to limit beta-oxidation, in which nhr-49 stimulates expression of fat-7 and acs-2, and in turn fat-7 indirectly inhibits acs-2 and other genes also involved in beta-oxidation. The chain is Delta(9)-fatty-acid desaturase fat-7 (fat-7) from Caenorhabditis elegans.